The chain runs to 447 residues: Adenylosuccinate synthetase (447 aa).

Residues 12–18 (GDEGKGK) and 40–42 (GHT) each bind GTP. Asp-13 serves as the catalytic Proton acceptor. Mg(2+) contacts are provided by Asp-13 and Gly-40. IMP is bound by residues 13–16 (DEGK), 38–41 (NAGH), Thr-128, Arg-142, Gln-223, Thr-238, and Arg-302. His-41 acts as the Proton donor in catalysis. 298 to 304 (TTTGRRR) lines the substrate pocket. Residues Arg-304, 330-332 (KLD), and 412-414 (SLG) each bind GTP.

It belongs to the adenylosuccinate synthetase family. Homodimer. Mg(2+) serves as cofactor.

Its subcellular location is the cytoplasm. It catalyses the reaction IMP + L-aspartate + GTP = N(6)-(1,2-dicarboxyethyl)-AMP + GDP + phosphate + 2 H(+). It participates in purine metabolism; AMP biosynthesis via de novo pathway; AMP from IMP: step 1/2. Its function is as follows. Plays an important role in the de novo pathway of purine nucleotide biosynthesis. Catalyzes the first committed step in the biosynthesis of AMP from IMP. This Thermosynechococcus vestitus (strain NIES-2133 / IAM M-273 / BP-1) protein is Adenylosuccinate synthetase.